The sequence spans 407 residues: L-cysteine:1D-myo-inositol 2-amino-2-deoxy-alpha-D-glucopyranoside ligase (407 aa).

The segment at 1–22 (MRSWSAPDIVPLPGTGGPLRVH) is disordered. Residue cysteine 43 coordinates Zn(2+). L-cysteinyl-5'-AMP contacts are provided by residues 43–46 (CGIT), threonine 58, and 81–83 (NTT). Positions 45 to 55 (ITPYDAAHLGH) match the 'HIGH' region motif. A 'ERGGDP' region motif is present at residues 183–188 (ERGGDP). Position 223 (tryptophan 223) interacts with L-cysteinyl-5'-AMP. Cysteine 227 serves as a coordination point for Zn(2+). 245-247 (GSD) contacts L-cysteinyl-5'-AMP. Histidine 252 contributes to the Zn(2+) binding site. L-cysteinyl-5'-AMP is bound at residue valine 278. Positions 284 to 288 (KMSKS) match the 'KMSKS' region motif.

It belongs to the class-I aminoacyl-tRNA synthetase family. MshC subfamily. In terms of assembly, monomer. Requires Zn(2+) as cofactor.

The enzyme catalyses 1D-myo-inositol 2-amino-2-deoxy-alpha-D-glucopyranoside + L-cysteine + ATP = 1D-myo-inositol 2-(L-cysteinylamino)-2-deoxy-alpha-D-glucopyranoside + AMP + diphosphate + H(+). Its function is as follows. Catalyzes the ATP-dependent condensation of GlcN-Ins and L-cysteine to form L-Cys-GlcN-Ins. The chain is L-cysteine:1D-myo-inositol 2-amino-2-deoxy-alpha-D-glucopyranoside ligase from Nocardiopsis dassonvillei (strain ATCC 23218 / DSM 43111 / CIP 107115 / JCM 7437 / KCTC 9190 / NBRC 14626 / NCTC 10488 / NRRL B-5397 / IMRU 509) (Actinomadura dassonvillei).